Here is a 68-residue protein sequence, read N- to C-terminus: Large ribosomal subunit protein eL24 (68 aa).

Residues C7, C10, C33, and C37 each coordinate Zn(2+). A C4-type zinc finger spans residues 7–37 (CSYCGREFEPGTGKMFVRNDGRVLFFCSSKC).

It belongs to the eukaryotic ribosomal protein eL24 family. In terms of assembly, part of the 50S ribosomal subunit. Forms a cluster with proteins L3 and L14. Zn(2+) is required as a cofactor.

In terms of biological role, binds to the 23S rRNA. In Thermococcus onnurineus (strain NA1), this protein is Large ribosomal subunit protein eL24.